Reading from the N-terminus, the 135-residue chain is Holo-[acyl-carrier-protein] synthase (135 aa).

Residues Asp-8 and Glu-58 each contribute to the Mg(2+) site.

It belongs to the P-Pant transferase superfamily. AcpS family. It depends on Mg(2+) as a cofactor.

Its subcellular location is the cytoplasm. It carries out the reaction apo-[ACP] + CoA = holo-[ACP] + adenosine 3',5'-bisphosphate + H(+). In terms of biological role, transfers the 4'-phosphopantetheine moiety from coenzyme A to a Ser of acyl-carrier-protein. In Leuconostoc citreum (strain KM20), this protein is Holo-[acyl-carrier-protein] synthase.